The chain runs to 268 residues: MARFLRLCTWLLVLGSCLLATVQAECSQDCAKCSYHLVSPGDINFLACTLECEGQMPSHKIWETCKDLLQVSKPEFPCDSINMFKDSNKQDESHLLAKKYGGFMKRYGGFMKKMDELYPVEPEEEANGGEILAKKYGGFMKKDADEGDTLANSSDLLKELLGTGDNRAREGRHQESTDNDDNMSKRYGGFMRGLKRSPQVEDEAKELQKRYGGFMRRVGRPEWWMDYQKRYGGFLKRFAESLPSDEEAESYSKEVPEIEKRYGGFMRF.

Residues methionine 1–alanine 24 form the signal peptide. Intrachain disulfides connect cysteine 26–cysteine 48, cysteine 30–cysteine 52, and cysteine 33–cysteine 65. The segment at glycine 162 to lysine 185 is disordered. A compositionally biased stretch (basic and acidic residues) spans asparagine 166–serine 176. Propeptides lie at residues serine 197–glutamine 208 and valine 218–glutamine 228. Phosphoserine is present on serine 252.

This sequence belongs to the opioid neuropeptide precursor family. In terms of processing, proenkephalin-A is cleaved by CTSL to generate Met-enkephalin. Processed and degraded by ACE. Post-translationally, probably cleaved by ACE. In terms of processing, processed by ACE to generate Met-enkephalin in the nucleus accumbens of the brain. The N-terminal domain contains 6 conserved cysteines thought to be involved in disulfide bonding and/or processing.

The protein resides in the cytoplasmic vesicle. The protein localises to the secretory vesicle. Its subcellular location is the chromaffin granule lumen. It is found in the secreted. Its function is as follows. Neuropeptide that competes with and mimic the effects of opiate drugs. They play a role in a number of physiologic functions, including pain perception and responses to stress. Met-enkephalin-Arg-Phe neuropeptide acts as a strong ligand of Mu-type opioid receptor OPRM1. Met-enkephalin-Arg-Phe-binding to OPRM1 in the nucleus accumbens of the brain increases activation of OPRM1, leading to long-term synaptic depression of glutamate release. In terms of biological role, increases glutamate release in the striatum and decreases GABA concentration in the striatum. Functionally, increases glutamate release in the striatum. The chain is Proenkephalin-A (PENK) from Mesocricetus auratus (Golden hamster).